Here is a 297-residue protein sequence, read N- to C-terminus: N-acetylmuramoyl-L-alanine amidase XlyA (297 aa).

An N-terminal signal peptide occupies residues 1-44 (MVNIIQDFIPVGANNRPGYAMTPLYITVHNTANTAVGADAAAHA). Positions 45–140 (RYLKNPDTTT…KYWSGKECPR (96 aa)) constitute an N-acetylmuramoyl-L-alanine amidase domain. Residues 159 to 203 (QTYVVKQGDTLTSIARAFGVTVAQLQEWNNIEDPNLIRVGQVLIV) enclose the LysM domain.

Belongs to the N-acetylmuramoyl-L-alanine amidase 2 family.

It is found in the secreted. It carries out the reaction Hydrolyzes the link between N-acetylmuramoyl residues and L-amino acid residues in certain cell-wall glycopeptides.. Autolysins are involved in some important biological processes such as cell separation, cell-wall turnover, competence for genetic transformation, formation of the flagella and sporulation. The sequence is that of N-acetylmuramoyl-L-alanine amidase XlyA (xlyA) from Bacillus subtilis (strain 168).